The sequence spans 472 residues: Ribulose bisphosphate carboxylase large chain (472 aa).

Residues N120 and T170 each contribute to the substrate site. K172 (proton acceptor) is an active-site residue. K174 is a binding site for substrate. Positions 198, 200, and 201 each coordinate Mg(2+). N6-carboxylysine is present on K198. The active-site Proton acceptor is the H291. 3 residues coordinate substrate: R292, H324, and S376.

The protein belongs to the RuBisCO large chain family. Type I subfamily. Heterohexadecamer of 8 large chains and 8 small chains. Mg(2+) is required as a cofactor.

The protein localises to the carboxysome. The enzyme catalyses 2 (2R)-3-phosphoglycerate + 2 H(+) = D-ribulose 1,5-bisphosphate + CO2 + H2O. It carries out the reaction D-ribulose 1,5-bisphosphate + O2 = 2-phosphoglycolate + (2R)-3-phosphoglycerate + 2 H(+). RuBisCO catalyzes two reactions: the carboxylation of D-ribulose 1,5-bisphosphate, the primary event in carbon dioxide fixation, as well as the oxidative fragmentation of the pentose substrate in the photorespiration process. Both reactions occur simultaneously and in competition at the same active site. The protein is Ribulose bisphosphate carboxylase large chain of Gloeothece citriformis (strain PCC 7424) (Cyanothece sp. (strain PCC 7424)).